Consider the following 140-residue polypeptide: Midkine (140 aa).

An N-terminal signal peptide occupies residues 1–20 (MQHRSFFLLALVALLAVTTA). 5 cysteine pairs are disulfide-bonded: cysteine 34–cysteine 58, cysteine 42–cysteine 67, cysteine 49–cysteine 71, cysteine 81–cysteine 113, and cysteine 91–cysteine 123.

The protein belongs to the pleiotrophin family. As to quaternary structure, homodimer. Interacts with ALK. Interacts with LRP1; promotes neuronal survival. Interacts with LRP2. Interacts with NCAM1. Interacts (via C-terminal) with PTPRZ1 (via chondroitin sulfate chains); this interaction is inhibited by PTN; this interaction promotes neuronal migration. Interacts with NCL; this interaction promotes NCL clustering and lateral movements of this complex into lipid rafts leading to MDK internalization. Interacts with LRP6 and LRP8: this interaction is calcium dependent. Interacts with ITGA4. Interacts with ITGA6. Interacts with ITGB1. Interacts with ITGA4:ITGB1 complex; this interaction mediates MDK-induced osteoblast cells migration through PXN phosphorylation. Interacts with ITGA6:ITGB1 complex; this interaction mediates MDK-induced neurite outgrowth. Interacts with NOTCH2; this interactio mediates a nuclear accumulation of NOTCH2 and therefore activation of NOTCH2 signaling leading to interaction between HES1 and STAT3. Interacts with GPC2 (via heparan sulfate chain); this interaction is inhibited by heparin followed by chondroitin sulfate E; this interaction induces GPC2 clustering through heparan sulfate chain; this interaction induces neuronal cell adhesion and neurite outgrowth. Interacts with SDC3; this interaction induces SDC3 clustering; this interaction induces neuronal cell adhesion and neurite outgrowth. Interacts with SDC1. Interacts with CSPG5; this interaction promotes elongation of oligodendroglial precursor-like cells. Expressed at a low level in arteries, and at higher levels in newly formed neointima. In brain, expressed in the caudate nucleus and the brain stem.

It is found in the secreted. In terms of biological role, developmentally regulated, secreted growth factor homologous to pleiotrophin (PTN), which has heparin binding activity. Binds anaplastic lymphoma kinase (ALK) which induces ALK activation and subsequent phosphorylation of the insulin receptor substrate (IRS1), followed by the activation of mitogen-activated protein kinase (MAPK) and PI3-kinase, and the induction of cell proliferation. Involved in neointima formation after arterial injury, possibly by mediating leukocyte recruitment. Also involved in early fetal adrenal gland development. Functionally, secreted protein that functions as a cytokine and growth factor and mediates its signal through cell-surface proteoglycan and non-proteoglycan receptors. Binds cell-surface proteoglycan receptors via their chondroitin sulfate (CS) groups. Thereby regulates many processes like inflammatory response, cell proliferation, cell adhesion, cell growth, cell survival, tissue regeneration, cell differentiation and cell migration. Participates in inflammatory processes by exerting two different activities. Firstly, mediates neutrophils and macrophages recruitment to the sites of inflammation both by direct action by cooperating namely with ITGB2 via LRP1 and by inducing chemokine expression. This inflammation can be accompanied by epithelial cell survival and smooth muscle cell migration after renal and vessel damage, respectively. Secondly, suppresses the development of tolerogenic dendric cells thereby inhibiting the differentiation of regulatory T cells and also promote T cell expansion through NFAT signaling and Th1 cell differentiation. Promotes tissue regeneration after injury or trauma. After heart damage negatively regulates the recruitment of inflammatory cells and mediates cell survival through activation of anti-apoptotic signaling pathways via MAPKs and AKT pathways through the activation of angiogenesis. Also facilitates liver regeneration as well as bone repair by recruiting macrophage at trauma site and by promoting cartilage development by facilitating chondrocyte differentiation. Plays a role in brain by promoting neural precursor cells survival and growth through interaction with heparan sulfate proteoglycans. Binds PTPRZ1 and promotes neuronal migration and embryonic neurons survival. Binds SDC3 or GPC2 and mediates neurite outgrowth and cell adhesion. Binds chondroitin sulfate E and heparin leading to inhibition of neuronal cell adhesion induced by binding with GPC2. Binds CSPG5 and promotes elongation of oligodendroglial precursor-like cells. Also binds ITGA6:ITGB1 complex; this interaction mediates MDK-induced neurite outgrowth. Binds LRP1; promotes neuronal survival. Binds ITGA4:ITGB1 complex; this interaction mediates MDK-induced osteoblast cells migration through PXN phosphorylation. Binds anaplastic lymphoma kinase (ALK) which induces ALK activation and subsequent phosphorylation of the insulin receptor substrate (IRS1), followed by the activation of mitogen-activated protein kinase (MAPK) and PI3-kinase, and the induction of cell proliferation. Promotes epithelial to mesenchymal transition through interaction with NOTCH2. During arteriogenesis, plays a role in vascular endothelial cell proliferation by inducing VEGFA expression and release which in turn induces nitric oxide synthase expression. Moreover activates vasodilation through nitric oxide synthase activation. Negatively regulates bone formation in response to mechanical load by inhibiting Wnt/beta-catenin signaling in osteoblasts. In addition plays a role in hippocampal development, working memory, auditory response, early fetal adrenal gland development and the female reproductive system. In Rattus norvegicus (Rat), this protein is Midkine.